We begin with the raw amino-acid sequence, 459 residues long: Probable acetate kinase (459 aa).

Mg(2+) is bound at residue asparagine 9. Lysine 16 lines the ATP pocket. Position 100 (arginine 100) interacts with substrate. Aspartate 156 acts as the Proton donor/acceptor in catalysis. Residues 216 to 220 (HLGSG) and 299 to 301 (DFR) contribute to the ATP site. Residues 308 to 338 (TTTSSPTPSPNPNPNPNPDPNPDPNPDPQNQ) are disordered. Over residues 314–334 (TPSPNPNPNPNPDPNPDPNPD) the composition is skewed to pro residues. Residue glutamate 441 coordinates Mg(2+).

It belongs to the acetokinase family. Mg(2+) is required as a cofactor.

It catalyses the reaction acetate + ATP = acetyl phosphate + ADP. It functions in the pathway metabolic intermediate biosynthesis; acetyl-CoA biosynthesis; acetyl-CoA from acetate: step 1/2. This is Probable acetate kinase from Chaetomium globosum (strain ATCC 6205 / CBS 148.51 / DSM 1962 / NBRC 6347 / NRRL 1970) (Soil fungus).